The sequence spans 252 residues: Origin recognition complex subunit 6 (252 aa).

Residues 188 to 232 (REPGDVATPPRKRKKIVVEAPAKEMEKVEEMPHKPQKDEDLTQDY) form a disordered region. T195 is modified (phosphothreonine). Basic and acidic residues predominate over residues 208–232 (PAKEMEKVEEMPHKPQKDEDLTQDY). Residue K210 forms a Glycyl lysine isopeptide (Lys-Gly) (interchain with G-Cter in SUMO2) linkage. Position 229 is a phosphothreonine (T229).

The protein belongs to the ORC6 family. In terms of assembly, component of ORC, a complex composed of at least 6 subunits: ORC1, ORC2, ORC3, ORC4, ORC5 and ORC6. ORC is regulated in a cell-cycle dependent manner. It is sequentially assembled at the exit from anaphase of mitosis and disassembled as cells enter S phase. Interacts with DBF4.

The protein resides in the nucleus. Functionally, component of the origin recognition complex (ORC) that binds origins of replication. DNA-binding is ATP-dependent. The specific DNA sequences that define origins of replication have not been identified yet. ORC is required to assemble the pre-replication complex necessary to initiate DNA replication. Does not bind histone H3 and H4 trimethylation marks H3K9me3, H3K27me3 and H4K20me3. The chain is Origin recognition complex subunit 6 (ORC6) from Homo sapiens (Human).